The following is a 272-amino-acid chain: Acetyl-coenzyme A carboxylase carboxyl transferase subunit alpha (272 aa).

In terms of domain architecture, CoA carboxyltransferase C-terminal spans 1-248 (MDKDFMKINV…KKTIVDSLLE (248 aa)).

Belongs to the AccA family. As to quaternary structure, acetyl-CoA carboxylase is a heterohexamer composed of biotin carboxyl carrier protein (AccB), biotin carboxylase (AccC) and two subunits each of ACCase subunit alpha (AccA) and ACCase subunit beta (AccD).

The protein localises to the cytoplasm. It carries out the reaction N(6)-carboxybiotinyl-L-lysyl-[protein] + acetyl-CoA = N(6)-biotinyl-L-lysyl-[protein] + malonyl-CoA. It functions in the pathway lipid metabolism; malonyl-CoA biosynthesis; malonyl-CoA from acetyl-CoA: step 1/1. Its function is as follows. Component of the acetyl coenzyme A carboxylase (ACC) complex. First, biotin carboxylase catalyzes the carboxylation of biotin on its carrier protein (BCCP) and then the CO(2) group is transferred by the carboxyltransferase to acetyl-CoA to form malonyl-CoA. In Clostridium beijerinckii (strain ATCC 51743 / NCIMB 8052) (Clostridium acetobutylicum), this protein is Acetyl-coenzyme A carboxylase carboxyl transferase subunit alpha.